The following is a 539-amino-acid chain: D-mannonate oxidoreductase (539 aa).

Residue 39–50 (WVHFGGGNIFRG) participates in NAD(+) binding.

Belongs to the mannitol dehydrogenase family. UxuB subfamily.

It catalyses the reaction D-mannonate + NAD(+) = keto-D-fructuronate + NADH + H(+). Its pathway is carbohydrate metabolism. Its function is as follows. Catalyzes the reduction of D-fructuronate (D-FruA) to D-mannonate (D-ManA). The sequence is that of D-mannonate oxidoreductase from Thermotoga maritima (strain ATCC 43589 / DSM 3109 / JCM 10099 / NBRC 100826 / MSB8).